A 141-amino-acid polypeptide reads, in one-letter code: Large ribosomal subunit protein uL11 (141 aa).

This sequence belongs to the universal ribosomal protein uL11 family. In terms of assembly, part of the ribosomal stalk of the 50S ribosomal subunit. Interacts with L10 and the large rRNA to form the base of the stalk. L10 forms an elongated spine to which L12 dimers bind in a sequential fashion forming a multimeric L10(L12)X complex. In terms of processing, one or more lysine residues are methylated.

Forms part of the ribosomal stalk which helps the ribosome interact with GTP-bound translation factors. The sequence is that of Large ribosomal subunit protein uL11 from Streptococcus uberis (strain ATCC BAA-854 / 0140J).